Here is a 308-residue protein sequence, read N- to C-terminus: GMP synthase [glutamine-hydrolyzing] subunit B (308 aa).

Positions 1 to 185 constitute a GMPS ATP-PPase domain; sequence MNWEKFVEEK…LGLPEKIYNR (185 aa). Residue 28-34 participates in ATP binding; it reads SGGVDSS.

In terms of assembly, heterodimer composed of a glutamine amidotransferase subunit (A) and a GMP-binding subunit (B).

It carries out the reaction XMP + L-glutamine + ATP + H2O = GMP + L-glutamate + AMP + diphosphate + 2 H(+). It functions in the pathway purine metabolism; GMP biosynthesis; GMP from XMP (L-Gln route): step 1/1. Catalyzes the synthesis of GMP from XMP. The protein is GMP synthase [glutamine-hydrolyzing] subunit B (guaAB) of Pyrococcus abyssi (strain GE5 / Orsay).